The chain runs to 71 residues: Prokaryotic ubiquitin-like protein Pup (71 aa).

Residues 1–18 are compositionally biased toward basic and acidic residues; sequence MPEKDTGGQHRATRRTEE. The tract at residues 1–36 is disordered; it reads MPEKDTGGQHRATRRTEEHDETIDEATATSDVQERR. Residues 27–65 form an ARC ATPase binding region; that stretch reads TATSDVQERREKLDADVDAILDEIDDVLEENAEEFVRSY. A coiled-coil region spans residues 30–59; that stretch reads SDVQERREKLDADVDAILDEIDDVLEENAE. Residue Glu71 forms an Isoglutamyl lysine isopeptide (Glu-Lys) (interchain with K-? in acceptor proteins) linkage.

This sequence belongs to the prokaryotic ubiquitin-like protein family. Strongly interacts with the proteasome-associated ATPase ARC through a hydrophobic interface; the interacting region of Pup lies in its C-terminal half. There is one Pup binding site per ARC hexamer ring.

It functions in the pathway protein degradation; proteasomal Pup-dependent pathway. Its function is as follows. Protein modifier that is covalently attached to lysine residues of substrate proteins, thereby targeting them for proteasomal degradation. The tagging system is termed pupylation. This Acidothermus cellulolyticus (strain ATCC 43068 / DSM 8971 / 11B) protein is Prokaryotic ubiquitin-like protein Pup.